Consider the following 232-residue polypeptide: 7-cyano-7-deazaguanine synthase (232 aa).

Position 8–18 (8–18 (FSGGQDSTTCL)) interacts with ATP. 4 residues coordinate Zn(2+): Cys-189, Cys-198, Cys-201, and Cys-204.

This sequence belongs to the QueC family. Zn(2+) serves as cofactor.

The enzyme catalyses 7-carboxy-7-deazaguanine + NH4(+) + ATP = 7-cyano-7-deazaguanine + ADP + phosphate + H2O + H(+). It functions in the pathway purine metabolism; 7-cyano-7-deazaguanine biosynthesis. In terms of biological role, catalyzes the ATP-dependent conversion of 7-carboxy-7-deazaguanine (CDG) to 7-cyano-7-deazaguanine (preQ(0)). This is 7-cyano-7-deazaguanine synthase from Yersinia pseudotuberculosis serotype O:1b (strain IP 31758).